A 142-amino-acid chain; its full sequence is Large ribosomal subunit protein bL21 (142 aa).

The segment covering K73–G84 has biased composition (basic residues). The interval K73–E142 is disordered. Residues K107–K125 show a composition bias toward basic and acidic residues. The span at P126–A135 shows a compositional bias: basic residues.

Belongs to the bacterial ribosomal protein bL21 family. In terms of assembly, part of the 50S ribosomal subunit. Contacts protein L20.

Functionally, this protein binds to 23S rRNA in the presence of protein L20. This chain is Large ribosomal subunit protein bL21, found in Brucella canis (strain ATCC 23365 / NCTC 10854 / RM-666).